Consider the following 93-residue polypeptide: MSITPSKKSELISEYRIKEGDTGSAYVQCAILSERIRNLTEHLRIHKKDYHCRRGLMVLVCKRRKRLQYIKNKYGSDLYLDLVKKLGIRDVFH.

This sequence belongs to the universal ribosomal protein uS15 family. In terms of assembly, part of the 30S ribosomal subunit. Forms a bridge to the 50S subunit in the 70S ribosome, contacting the 23S rRNA.

In terms of biological role, one of the primary rRNA binding proteins, it binds directly to 16S rRNA where it helps nucleate assembly of the platform of the 30S subunit by binding and bridging several RNA helices of the 16S rRNA. Its function is as follows. Forms an intersubunit bridge (bridge B4) with the 23S rRNA of the 50S subunit in the ribosome. This chain is Small ribosomal subunit protein uS15, found in Anaplasma phagocytophilum (strain HZ).